Here is a 249-residue protein sequence, read N- to C-terminus: Inner membrane protein pE248R (249 aa).

Gly-2 is lipidated: N-myristoyl glycine; by host. The Cytoplasmic segment spans residues 2–199 (GGSTSKNSFK…ADAISAVFKN (198 aa)). Residues 200–220 (IMVAAVVIVVIIVGFIAVFYF) form a helical membrane-spanning segment. Residues 221-249 (LHSRHRHEEEEEAEPLITSKILKNAAVSQ) lie on the Extracellular side of the membrane.

It belongs to the asfivirus E248R family. As to quaternary structure, interacts with A151R.

The protein resides in the host membrane. It is found in the virion membrane. In terms of biological role, essential for viral fusion with host endosomal membrane and core release. The polypeptide is Inner membrane protein pE248R (African swine fever virus (isolate Pig/Kenya/KEN-50/1950) (ASFV)).